We begin with the raw amino-acid sequence, 370 residues long: Phosphoserine aminotransferase (370 aa).

N-acetylmethionine is present on Met-1. Residues His-44 and Arg-45 each coordinate O-phospho-L-serine. Position 51 is an N6-acetyllysine (Lys-51). Residues Gly-79, Cys-80, and Trp-107 each contribute to the pyridoxal 5'-phosphate site. Lys-127 bears the N6-acetyllysine mark. Pyridoxal 5'-phosphate-binding residues include Thr-156, Asp-176, and Gln-199. Residue Lys-200 is modified to N6-(pyridoxal phosphate)lysine. Positions 241 and 242 each coordinate pyridoxal 5'-phosphate. Lys-269, Lys-318, and Lys-323 each carry N6-acetyllysine. A Phosphoserine modification is found at Ser-331. Lys-333 bears the N6-acetyllysine mark. O-phospho-L-serine is bound by residues His-335, Arg-336, and Arg-342.

It belongs to the class-V pyridoxal-phosphate-dependent aminotransferase family. SerC subfamily. As to quaternary structure, homodimer. Pyridoxal 5'-phosphate serves as cofactor.

The enzyme catalyses O-phospho-L-serine + 2-oxoglutarate = 3-phosphooxypyruvate + L-glutamate. It functions in the pathway amino-acid biosynthesis; L-serine biosynthesis; L-serine from 3-phospho-D-glycerate: step 2/3. Functionally, involved in L-serine biosynthesis via the phosphorylated pathway, a three-step pathway converting the glycolytic intermediate 3-phospho-D-glycerate into L-serine. Catalyzes the second step, that is the pyridoxal 5'-phosphate-dependent transamination of 3-phosphohydroxypyruvate and L-glutamate to O-phosphoserine (OPS) and alpha-ketoglutarate. The chain is Phosphoserine aminotransferase (PSAT1) from Oryctolagus cuniculus (Rabbit).